The sequence spans 284 residues: 2-dehydro-3-deoxyphosphooctonate aldolase (284 aa).

It belongs to the KdsA family.

The protein resides in the cytoplasm. The catalysed reaction is D-arabinose 5-phosphate + phosphoenolpyruvate + H2O = 3-deoxy-alpha-D-manno-2-octulosonate-8-phosphate + phosphate. The protein operates within carbohydrate biosynthesis; 3-deoxy-D-manno-octulosonate biosynthesis; 3-deoxy-D-manno-octulosonate from D-ribulose 5-phosphate: step 2/3. It functions in the pathway bacterial outer membrane biogenesis; lipopolysaccharide biosynthesis. This Photorhabdus laumondii subsp. laumondii (strain DSM 15139 / CIP 105565 / TT01) (Photorhabdus luminescens subsp. laumondii) protein is 2-dehydro-3-deoxyphosphooctonate aldolase.